The chain runs to 528 residues: Chaperonin GroEL, chloroplastic (528 aa).

ATP contacts are provided by residues 29 to 32, 86 to 90, glycine 414, 480 to 482, and aspartate 496; these read TLGP, DGTTT, and DAA.

It belongs to the chaperonin (HSP60) family. Forms a cylinder of 14 subunits composed of two heptameric rings stacked back-to-back. Interacts with the co-chaperonin GroES.

It localises to the plastid. Its subcellular location is the chloroplast. It catalyses the reaction ATP + H2O + a folded polypeptide = ADP + phosphate + an unfolded polypeptide.. Its function is as follows. Together with its co-chaperonin GroES, plays an essential role in assisting protein folding. The GroEL-GroES system forms a nano-cage that allows encapsulation of the non-native substrate proteins and provides a physical environment optimized to promote and accelerate protein folding. The polypeptide is Chaperonin GroEL, chloroplastic (Pyropia yezoensis (Susabi-nori)).